The sequence spans 279 residues: Pantothenate synthetase (279 aa).

31–38 lines the ATP pocket; that stretch reads MGALHEGH. The Proton donor role is filled by H38. Q62 is a (R)-pantoate binding site. Position 62 (Q62) interacts with beta-alanine. An ATP-binding site is contributed by 148 to 151; sequence GEKD. Q154 contacts (R)-pantoate. ATP-binding positions include V177 and 185–188; that span reads LSSR.

Belongs to the pantothenate synthetase family. Homodimer.

The protein localises to the cytoplasm. The catalysed reaction is (R)-pantoate + beta-alanine + ATP = (R)-pantothenate + AMP + diphosphate + H(+). The protein operates within cofactor biosynthesis; (R)-pantothenate biosynthesis; (R)-pantothenate from (R)-pantoate and beta-alanine: step 1/1. Catalyzes the condensation of pantoate with beta-alanine in an ATP-dependent reaction via a pantoyl-adenylate intermediate. In Cereibacter sphaeroides (strain ATCC 17023 / DSM 158 / JCM 6121 / CCUG 31486 / LMG 2827 / NBRC 12203 / NCIMB 8253 / ATH 2.4.1.) (Rhodobacter sphaeroides), this protein is Pantothenate synthetase.